The sequence spans 467 residues: 2-succinylbenzoate--CoA ligase (467 aa).

Belongs to the ATP-dependent AMP-binding enzyme family. MenE subfamily.

The catalysed reaction is 2-succinylbenzoate + ATP + CoA = 2-succinylbenzoyl-CoA + AMP + diphosphate. The protein operates within quinol/quinone metabolism; 1,4-dihydroxy-2-naphthoate biosynthesis; 1,4-dihydroxy-2-naphthoate from chorismate: step 5/7. It participates in quinol/quinone metabolism; menaquinone biosynthesis. Functionally, converts 2-succinylbenzoate (OSB) to 2-succinylbenzoyl-CoA (OSB-CoA). This chain is 2-succinylbenzoate--CoA ligase, found in Listeria monocytogenes serovar 1/2a (strain ATCC BAA-679 / EGD-e).